The primary structure comprises 155 residues: SsrA-binding protein (155 aa).

This sequence belongs to the SmpB family.

It localises to the cytoplasm. Required for rescue of stalled ribosomes mediated by trans-translation. Binds to transfer-messenger RNA (tmRNA), required for stable association of tmRNA with ribosomes. tmRNA and SmpB together mimic tRNA shape, replacing the anticodon stem-loop with SmpB. tmRNA is encoded by the ssrA gene; the 2 termini fold to resemble tRNA(Ala) and it encodes a 'tag peptide', a short internal open reading frame. During trans-translation Ala-aminoacylated tmRNA acts like a tRNA, entering the A-site of stalled ribosomes, displacing the stalled mRNA. The ribosome then switches to translate the ORF on the tmRNA; the nascent peptide is terminated with the 'tag peptide' encoded by the tmRNA and targeted for degradation. The ribosome is freed to recommence translation, which seems to be the essential function of trans-translation. The sequence is that of SsrA-binding protein from Bordetella bronchiseptica (strain ATCC BAA-588 / NCTC 13252 / RB50) (Alcaligenes bronchisepticus).